The sequence spans 470 residues: Cholesterol 7-desaturase nvd 1 (470 aa).

The chain crosses the membrane as a helical span at residues 67 to 87 (LALCIAGFSVLMYFLYVLVFV). Positions 136–238 (FRLVDSQQLE…CREVNKAIFV (103 aa)) constitute a Rieske domain. [2Fe-2S] cluster is bound by residues cysteine 176, histidine 178, cysteine 196, and histidine 199.

It belongs to the cholesterol 7-desaturase family. [2Fe-2S] cluster serves as cofactor.

It localises to the membrane. It carries out the reaction cholesterol + NADPH + O2 + H(+) = 7-dehydrocholesterol + NADP(+) + 2 H2O. It catalyses the reaction cholesterol + NADH + O2 + H(+) = 7-dehydrocholesterol + NAD(+) + 2 H2O. The protein operates within steroid hormone biosynthesis; dafachronic acid biosynthesis. In terms of biological role, catalyzes the production of 7-dehydrocholesterol (7-DHC or cholesta-5,7-dien-3beta-ol) by inserting a double bond (desaturating) at the C7-C8 single bond of cholesterol. Essential regulator of steroid biosynthesis as this reaction is the first step in the synthesis of the steroid hormone Delta(7)-dafachronic acid. The chain is Cholesterol 7-desaturase nvd 1 from Ciona intestinalis (Transparent sea squirt).